The chain runs to 349 residues: Isopentenyl-diphosphate delta-isomerase (349 aa).

9 to 10 (RK) serves as a coordination point for substrate. FMN-binding positions include 65–67 (AMT), Ser95, and Asn124. 95–97 (STH) provides a ligand contact to substrate. Gln154 lines the substrate pocket. Glu155 serves as a coordination point for Mg(2+). FMN-binding positions include Lys186, Ser211, Thr216, 262 to 264 (GVR), and 283 to 284 (SR).

The protein belongs to the IPP isomerase type 2 family. As to quaternary structure, homooctamer. Dimer of tetramers. FMN is required as a cofactor. Requires NADPH as cofactor. The cofactor is Mg(2+).

Its subcellular location is the cytoplasm. It carries out the reaction isopentenyl diphosphate = dimethylallyl diphosphate. In terms of biological role, involved in the biosynthesis of isoprenoids. Catalyzes the 1,3-allylic rearrangement of the homoallylic substrate isopentenyl (IPP) to its allylic isomer, dimethylallyl diphosphate (DMAPP). The chain is Isopentenyl-diphosphate delta-isomerase from Staphylococcus haemolyticus (strain JCSC1435).